A 341-amino-acid chain; its full sequence is Malate dehydrogenase, mitochondrial (341 aa).

NAD(+) is bound by residues 35-41 and Asp-61; that span reads GAGGGIG. The substrate site is built by Arg-109 and Arg-115. Asn-122 contributes to the NAD(+) binding site. 2 residues coordinate substrate: Asn-147 and Arg-181. His-205 functions as the Proton acceptor in the catalytic mechanism. Met-254 contributes to the NAD(+) binding site.

Belongs to the LDH/MDH superfamily. MDH type 1 family. In terms of assembly, homodimer.

The protein localises to the mitochondrion matrix. It carries out the reaction (S)-malate + NAD(+) = oxaloacetate + NADH + H(+). The sequence is that of Malate dehydrogenase, mitochondrial (MDH1) from Schizosaccharomyces pombe (strain 972 / ATCC 24843) (Fission yeast).